We begin with the raw amino-acid sequence, 139 residues long: Large ribosomal subunit protein uL13 (139 aa).

This sequence belongs to the universal ribosomal protein uL13 family. As to quaternary structure, part of the 50S ribosomal subunit.

This protein is one of the early assembly proteins of the 50S ribosomal subunit, although it is not seen to bind rRNA by itself. It is important during the early stages of 50S assembly. This is Large ribosomal subunit protein uL13 from Aliarcobacter butzleri (strain RM4018) (Arcobacter butzleri).